Here is a 511-residue protein sequence, read N- to C-terminus: ATP synthase subunit alpha (511 aa).

ATP is bound at residue 169–176 (GDRQTGKT).

Belongs to the ATPase alpha/beta chains family. F-type ATPases have 2 components, CF(1) - the catalytic core - and CF(0) - the membrane proton channel. CF(1) has five subunits: alpha(3), beta(3), gamma(1), delta(1), epsilon(1). CF(0) has three main subunits: a(1), b(2) and c(9-12). The alpha and beta chains form an alternating ring which encloses part of the gamma chain. CF(1) is attached to CF(0) by a central stalk formed by the gamma and epsilon chains, while a peripheral stalk is formed by the delta and b chains.

The protein localises to the cell inner membrane. It catalyses the reaction ATP + H2O + 4 H(+)(in) = ADP + phosphate + 5 H(+)(out). Its function is as follows. Produces ATP from ADP in the presence of a proton gradient across the membrane. The alpha chain is a regulatory subunit. The protein is ATP synthase subunit alpha of Bartonella henselae (strain ATCC 49882 / DSM 28221 / CCUG 30454 / Houston 1) (Rochalimaea henselae).